A 98-amino-acid polypeptide reads, in one-letter code: Integration host factor subunit alpha (98 aa).

Residues 49 to 71 (FGNFDLRDKNQRPGRNPKTGEDI) form a disordered region.

It belongs to the bacterial histone-like protein family. As to quaternary structure, heterodimer of an alpha and a beta chain.

This protein is one of the two subunits of integration host factor, a specific DNA-binding protein that functions in genetic recombination as well as in transcriptional and translational control. The protein is Integration host factor subunit alpha of Pectobacterium atrosepticum (strain SCRI 1043 / ATCC BAA-672) (Erwinia carotovora subsp. atroseptica).